Reading from the N-terminus, the 109-residue chain is ATPase inhibitor mai-2, mitochondrial (109 aa).

Disordered regions lie at residues 18 to 39 and 73 to 109; these read FSAG…SIRD and EEVK…LGKE. The span at 21–35 shows a compositional bias: gly residues; the sequence is GGHGDGAGRGGGSGG. Residues 55-109 are a coiled coil; that stretch reads YFYKKQKAQLQELREHIQEEVKHHEGQLENHKKVLERHQQRISEIEAQERALGKE.

The protein belongs to the ATPase inhibitor family.

Its subcellular location is the mitochondrion. Functionally, thought to be a regulatory component of the ATP-synthesizing complex in the mitochondria. Activity is pH dependent. The protein is ATPase inhibitor mai-2, mitochondrial (mai-2) of Caenorhabditis elegans.